The following is a 115-amino-acid chain: Large ribosomal subunit protein bL19 (115 aa).

This sequence belongs to the bacterial ribosomal protein bL19 family.

This protein is located at the 30S-50S ribosomal subunit interface and may play a role in the structure and function of the aminoacyl-tRNA binding site. The sequence is that of Large ribosomal subunit protein bL19 from Streptococcus pneumoniae (strain JJA).